A 448-amino-acid polypeptide reads, in one-letter code: MSHRYIPLTEKDKQEMLQTIGAKSIGELFGDVPSDILLNRDLNIAEGEAETTLLRRLNRIASKNITKETHTSFLGAGVYDHYAPSVVDAMISRSEFYTAYTPYQPEISQGELQAIFEFQTLICELTDMDVANSSMYDGMTSFAEACILAFSQTKKNKIVVSKGLHYQALQVLHTYAKTRKEFEVVEIDLDGTVTDLKKLEAAVDDETAAVAVQYPNFYGSIEDLKKIHSFIEDKKALFIVYANPLALGLLTPPGSFGADIVVGDTQPFGIPAQFGGPHCGYFATTKKLMRKVPGRLVGQTQDDEGNRGFVLTLQAREQHIRRDKATSNICSNQALNALASSIAMSALGKQGIYDIAVQNIEHANYAKQQFIKKGFEVLDGTSFNEFVVKFDKPIQQVNEELVKYNIIGGFDLGVVSDDFKNHMLIAVTELRTKDEIDTFVEKAGELND.

It belongs to the GcvP family. N-terminal subunit subfamily. The glycine cleavage system is composed of four proteins: P, T, L and H. In this organism, the P 'protein' is a heterodimer of two subunits.

It catalyses the reaction N(6)-[(R)-lipoyl]-L-lysyl-[glycine-cleavage complex H protein] + glycine + H(+) = N(6)-[(R)-S(8)-aminomethyldihydrolipoyl]-L-lysyl-[glycine-cleavage complex H protein] + CO2. In terms of biological role, the glycine cleavage system catalyzes the degradation of glycine. The P protein binds the alpha-amino group of glycine through its pyridoxal phosphate cofactor; CO(2) is released and the remaining methylamine moiety is then transferred to the lipoamide cofactor of the H protein. This is Probable glycine dehydrogenase (decarboxylating) subunit 1 from Staphylococcus aureus (strain COL).